Consider the following 778-residue polypeptide: Glutathione biosynthesis bifunctional protein GshAB (778 aa).

A glutamate--cysteine ligase region spans residues 1–354 (MVNLDKGLLK…EEFFKNHDMV (354 aa)). The 257-residue stretch at 521 to 777 (KDILRENNIR…AGEKILDLLF (257 aa)) folds into the ATP-grasp domain. ATP is bound at residue 548–606 (RLFKDEKIVIKPKSTNFGLGISIFPGEYSREDYDKAVEIAFREDSSILIEEFMTGKEYR). Residues Asp728, Glu747, and Asn749 each contribute to the Mg(2+) site. 3 residues coordinate Mn(2+): Asp728, Glu747, and Asn749.

The protein in the N-terminal section; belongs to the glutamate--cysteine ligase type 1 family. Type 2 subfamily. As to quaternary structure, monomer. The cofactor is Mg(2+). Mn(2+) serves as cofactor.

The catalysed reaction is L-cysteine + L-glutamate + ATP = gamma-L-glutamyl-L-cysteine + ADP + phosphate + H(+). It catalyses the reaction gamma-L-glutamyl-L-cysteine + glycine + ATP = glutathione + ADP + phosphate + H(+). It functions in the pathway sulfur metabolism; glutathione biosynthesis; glutathione from L-cysteine and L-glutamate: step 1/2. Its pathway is sulfur metabolism; glutathione biosynthesis; glutathione from L-cysteine and L-glutamate: step 2/2. In terms of biological role, synthesizes glutathione from L-glutamate and L-cysteine via gamma-L-glutamyl-L-cysteine. The polypeptide is Glutathione biosynthesis bifunctional protein GshAB (Clostridium perfringens (strain 13 / Type A)).